Reading from the N-terminus, the 40-residue chain is Photosystem II reaction center protein J (40 aa).

A helical membrane pass occupies residues 8–28 (IPLWIIGTVTGILVIGLVGIF).

The protein belongs to the PsbJ family. In terms of assembly, PSII is composed of 1 copy each of membrane proteins PsbA, PsbB, PsbC, PsbD, PsbE, PsbF, PsbH, PsbI, PsbJ, PsbK, PsbL, PsbM, PsbT, PsbX, PsbY, PsbZ, Psb30/Ycf12, at least 3 peripheral proteins of the oxygen-evolving complex and a large number of cofactors. It forms dimeric complexes.

It localises to the plastid. It is found in the chloroplast thylakoid membrane. One of the components of the core complex of photosystem II (PSII). PSII is a light-driven water:plastoquinone oxidoreductase that uses light energy to abstract electrons from H(2)O, generating O(2) and a proton gradient subsequently used for ATP formation. It consists of a core antenna complex that captures photons, and an electron transfer chain that converts photonic excitation into a charge separation. This is Photosystem II reaction center protein J from Jasminum nudiflorum (Winter jasmine).